The chain runs to 4456 residues: Dynein axonemal heavy chain 2 (4456 aa).

Residues 1 to 12 show a composition bias toward basic residues; the sequence is MASKAEKKRKVA. Positions 1-55 are disordered; that stretch reads MASKAEKKRKVAGRGGARAGRVVRAPQSTAGPGATEASLLPDGQEPEPESGKEDS. The segment at 1–1795 is stem; it reads MASKAEKKRK…RQTNTQFQYG (1795 aa). The stretch at 1218–1274 forms a coiled coil; that stretch reads LDQIAQMRAMLMAMRDEENNLRSNLGIFKIEQPVSKDLQILEKELDALQQVWEITRD. Residues 1439–1474 form a TPR 1 repeat; that stretch reads EDNQVALSTMKASRFVKAFEKDVDHWERCLSLILEV. AAA stretches follow at residues 1794–2015, 2075–2302, 2407–2654, and 2751–3003; these read YGYE…LLRY, DTIE…DNCN, RYPP…VFQG, and EYNL…LRRY. ATP contacts are provided by residues 1832 to 1839, 2113 to 2120, and 2445 to 2452; these read GPAGTGKT, GGTGSSKT, and GPVGTGKT. The TPR 2 repeat unit spans residues 2750 to 2783; that stretch reads NEYNLSPSVVPMQLVLFREAIEHITRIVRVIGQP. 2791–2798 provides a ligand contact to ATP; it reads GIGGSGRQ. Residues 3018 to 3301 form a stalk region; that stretch reads YKKLLGEKRQ…EELRKKSEEM (284 aa). Residues 3041–3078 adopt a coiled-coil conformation; the sequence is FKIDETREKVEVMSLELEDAKKKVAEFQKQCEEYLVII. A TPR 3 repeat occupies 3101–3134; sequence IEEVKCQALADNAQKDLEEALPALEEAMRALESL. Coiled-coil stretches lie at residues 3245-3333 and 3552-3596; these read KRIR…EEDL and VRKE…GSLL. AAA stretches follow at residues 3387-3617 and 3833-4052; these read LTNP…EVTE and VTSF…LLSL. 2 TPR repeats span residues 4101-4134 and 4135-4169; these read TTPF…LPSM and DPPE…QPQI.

Belongs to the dynein heavy chain family. Part of the axonemal inner dynein arm complex that consists of at least two heavy chains and a number of intermediate and light chains. Interacts with DNAI4.

It is found in the cytoplasm. The protein localises to the cytoskeleton. Its subcellular location is the cilium axoneme. It localises to the flagellum axoneme. Its function is as follows. As part of the axonemal inner dynein arm complex plays a central role in ciliary beat. Expressed in sperm flagellum, it is required for sperm motility. Dyneins are microtubule-based molecular motors possessing ATPase activities that can convert the chemical energy of ATP into relative sliding between adjacent microtubule doublets to generate ciliary bending. The chain is Dynein axonemal heavy chain 2 from Mus musculus (Mouse).